A 381-amino-acid polypeptide reads, in one-letter code: 1-deoxy-D-xylulose 5-phosphate reductoisomerase (381 aa).

NADPH is bound by residues Thr-11, Gly-12, Ser-13, Ile-14, Asn-37, and Asn-121. A 1-deoxy-D-xylulose 5-phosphate-binding site is contributed by Lys-122. Residue Glu-123 coordinates NADPH. Residue Asp-147 coordinates Mn(2+). Ser-148, Glu-149, Ser-173, and His-196 together coordinate 1-deoxy-D-xylulose 5-phosphate. Glu-149 contacts Mn(2+). Gly-202 contacts NADPH. 1-deoxy-D-xylulose 5-phosphate is bound by residues Ser-209, Asn-214, Lys-215, and Glu-218. Glu-218 serves as a coordination point for Mn(2+).

The protein belongs to the DXR family. The cofactor is Mg(2+). It depends on Mn(2+) as a cofactor.

The enzyme catalyses 2-C-methyl-D-erythritol 4-phosphate + NADP(+) = 1-deoxy-D-xylulose 5-phosphate + NADPH + H(+). It functions in the pathway isoprenoid biosynthesis; isopentenyl diphosphate biosynthesis via DXP pathway; isopentenyl diphosphate from 1-deoxy-D-xylulose 5-phosphate: step 1/6. Functionally, catalyzes the NADPH-dependent rearrangement and reduction of 1-deoxy-D-xylulose-5-phosphate (DXP) to 2-C-methyl-D-erythritol 4-phosphate (MEP). In Ruminiclostridium cellulolyticum (strain ATCC 35319 / DSM 5812 / JCM 6584 / H10) (Clostridium cellulolyticum), this protein is 1-deoxy-D-xylulose 5-phosphate reductoisomerase.